Here is a 1136-residue protein sequence, read N- to C-terminus: Nitric oxide synthase, inducible (1136 aa).

The Zn(2+) site is built by C107 and C112. Position 197 (C197) interacts with heme b. Positions 260, 369, 370, and 374 each coordinate L-arginine. Residues R378, V459, W460, and F473 each contribute to the (6R)-L-erythro-5,6,7,8-tetrahydrobiopterin site. Y488 serves as a coordination point for heme b. Residues 512-532 (LSILAKAVLLASLLLQKTMAA) form a calmodulin-binding region. One can recognise a Flavodoxin-like domain in the interval 536-674 (VTVIYATETG…AFRTWAVTAF (139 aa)). The FMN site is built by T542, E543, T544, K546, S547, S588, T589, S625, C632, E658, and Q662. Residues 727-967 (KNVIPMKLKF…VRSADGFRLP (241 aa)) form the FAD-binding FR-type domain. R747 serves as a coordination point for NADP(+). FAD contacts are provided by H769, R903, Y905, S906, T921, A923, Y927, V940, C941, and S942. 8 residues coordinate NADP(+): T981, R1014, S1043, R1044, K1050, Y1052, Q1054, and D1087.

It belongs to the NOS family. In terms of assembly, homodimer. The cofactor is heme b. It depends on FAD as a cofactor. FMN is required as a cofactor. Requires (6R)-L-erythro-5,6,7,8-tetrahydrobiopterin as cofactor.

It localises to the cytoplasm. Its subcellular location is the cytosol. The catalysed reaction is 2 L-arginine + 3 NADPH + 4 O2 + H(+) = 2 L-citrulline + 2 nitric oxide + 3 NADP(+) + 4 H2O. With respect to regulation, not stimulated by calcium/calmodulin. Produces nitric oxide (NO) which is a messenger molecule with diverse functions throughout the body. NO may serve as both a paracrine and autocrine signal for modulating osteoclast bone resorption. Also has nitrosylase activity and mediates cysteine S-nitrosylation of cytoplasmic target proteins such COX2. This Gallus gallus (Chicken) protein is Nitric oxide synthase, inducible (NOS2).